Consider the following 383-residue polypeptide: tRNA (guanine(26)-N(2))-dimethyltransferase (383 aa).

The 368-residue stretch at 4–371 (EIITEGRTPL…ASPEEFEAVL (368 aa)) folds into the Trm1 methyltransferase domain. The S-adenosyl-L-methionine site is built by Arg38, Arg63, Asp80, Asp108, and Ala109. 4 residues coordinate Zn(2+): Cys243, Cys246, Cys258, and Cys261.

This sequence belongs to the class I-like SAM-binding methyltransferase superfamily. Trm1 family.

It catalyses the reaction guanosine(26) in tRNA + 2 S-adenosyl-L-methionine = N(2)-dimethylguanosine(26) in tRNA + 2 S-adenosyl-L-homocysteine + 2 H(+). Dimethylates a single guanine residue at position 26 of a number of tRNAs using S-adenosyl-L-methionine as donor of the methyl groups. The protein is tRNA (guanine(26)-N(2))-dimethyltransferase of Methanopyrus kandleri (strain AV19 / DSM 6324 / JCM 9639 / NBRC 100938).